Reading from the N-terminus, the 249-residue chain is Triosephosphate isomerase (249 aa).

2 residues coordinate substrate: asparagine 12 and lysine 14. N6-acetyllysine is present on lysine 14. At serine 21 the chain carries Phosphoserine. Tyrosine 68 is modified (3'-nitrotyrosine). A Phosphoserine modification is found at serine 80. Histidine 96 (electrophile) is an active-site residue. Serine 106 carries the post-translational modification Phosphoserine. A Glycyl lysine isopeptide (Lys-Gly) (interchain with G-Cter in SUMO1) cross-link involves residue lysine 142. Lysine 149 bears the N6-succinyllysine mark. Lysine 156 bears the N6-acetyllysine; alternate mark. The residue at position 156 (lysine 156) is an N6-succinyllysine; alternate. Serine 159 is subject to Phosphoserine. Glutamate 166 (proton acceptor) is an active-site residue. Threonine 173 is modified (phosphothreonine). At lysine 194 the chain carries N6-acetyllysine; alternate. N6-succinyllysine; alternate is present on lysine 194. Lysine 194 carries the N6-methyllysine; alternate modification. Serine 198 carries the phosphoserine modification. Tyrosine 209 carries the 3'-nitrotyrosine modification. The residue at position 212 (serine 212) is a Phosphoserine. Residue threonine 214 is modified to Phosphothreonine. Serine 223 is modified (phosphoserine). The residue at position 238 (lysine 238) is an N6-acetyllysine.

It belongs to the triosephosphate isomerase family. As to quaternary structure, homodimer.

Its subcellular location is the cytoplasm. It catalyses the reaction D-glyceraldehyde 3-phosphate = dihydroxyacetone phosphate. The catalysed reaction is dihydroxyacetone phosphate = methylglyoxal + phosphate. It functions in the pathway carbohydrate degradation; glycolysis; D-glyceraldehyde 3-phosphate from glycerone phosphate: step 1/1. Its pathway is carbohydrate biosynthesis; gluconeogenesis. Functionally, triosephosphate isomerase is an extremely efficient metabolic enzyme that catalyzes the interconversion between dihydroxyacetone phosphate (DHAP) and D-glyceraldehyde-3-phosphate (G3P) in glycolysis and gluconeogenesis. In terms of biological role, it is also responsible for the non-negligible production of methylglyoxal a reactive cytotoxic side-product that modifies and can alter proteins, DNA and lipids. The protein is Triosephosphate isomerase (TPI1) of Homo sapiens (Human).